The primary structure comprises 103 residues: Large ribosomal subunit protein bL21 (103 aa).

It belongs to the bacterial ribosomal protein bL21 family. As to quaternary structure, part of the 50S ribosomal subunit. Contacts protein L20.

Its function is as follows. This protein binds to 23S rRNA in the presence of protein L20. This Acidovorax sp. (strain JS42) protein is Large ribosomal subunit protein bL21.